The primary structure comprises 306 residues: MALDFLAGCAGGVAGVIVGHPFDTVKVRLQVQNTEKPQYRGTLHCFQSIIKQESVLGLYKGLGSPLMGLTFINALVFGVQGNTLRALGQDSPLNQFLAGAAAGAIQCVICCPMELAKTRLQLQAAGPARAYKGSLDCLVQIYRHEGLRGINRGMVSTLLRETPSFGVYFLTYDVLTRAMGCEPGDRLLVPKLLLAGGTSGITSWLSTYPMDVVKSRLQADGLQGTPRYRGIVDCMRQSYQAEGWQVFTRGLASTLLRAFPVNAATFATVTVVLTYIRGEEDQVDSEAAPGASTTPAGPALAQPSSL.

The next 6 helical transmembrane spans lie at 2–22, 61–81, 96–116, 153–172, 187–207, and 255–275; these read ALDF…GHPF, GLGS…GVQG, FLAG…MELA, GMVS…FLTY, LLVP…WLST, and LLRA…VLTY. Solcar repeat units lie at residues 2-86, 90-178, and 190-275; these read ALDF…TLRA, DSPL…LTRA, and PKLL…VLTY. The disordered stretch occupies residues 283 to 306; that stretch reads VDSEAAPGASTTPAGPALAQPSSL. Positions 287 to 306 are enriched in low complexity; that stretch reads AAPGASTTPAGPALAQPSSL.

It belongs to the mitochondrial carrier (TC 2.A.29) family.

The protein localises to the mitochondrion inner membrane. The catalysed reaction is L-lysine(out) + L-arginine(in) = L-lysine(in) + L-arginine(out). It catalyses the reaction L-histidine(out) + L-arginine(in) = L-histidine(in) + L-arginine(out). It carries out the reaction L-ornithine(in) + L-arginine(out) = L-ornithine(out) + L-arginine(in). The enzyme catalyses L-homoarginine(in) + L-arginine(out) = L-homoarginine(out) + L-arginine(in). The catalysed reaction is N(omega)-methyl-L-arginine(in) + L-arginine(out) = N(omega)-methyl-L-arginine(out) + L-arginine(in). It catalyses the reaction L-arginine(in) = L-arginine(out). It carries out the reaction L-lysine(in) = L-lysine(out). The enzyme catalyses L-ornithine(in) = L-ornithine(out). The catalysed reaction is L-histidine(out) = L-histidine(in). In terms of biological role, mitochondrial transporter of arginine, lysine, homoarginine, methylarginine and, to a much lesser extent, ornithine and histidine. Does not transport carnitine nor acylcarnitines. Functions by both counter-exchange and uniport mechanisms. Plays a physiological role in the import of basic amino acids into mitochondria for mitochondrial protein synthesis and amino acid degradation. The polypeptide is Mitochondrial basic amino acids transporter (Slc25a29) (Rattus norvegicus (Rat)).